A 199-amino-acid polypeptide reads, in one-letter code: Large ribosomal subunit protein bL25 (199 aa).

It belongs to the bacterial ribosomal protein bL25 family. CTC subfamily. Part of the 50S ribosomal subunit; part of the 5S rRNA/L5/L18/L25 subcomplex. Contacts the 5S rRNA. Binds to the 5S rRNA independently of L5 and L18.

Functionally, this is one of the proteins that binds to the 5S RNA in the ribosome where it forms part of the central protuberance. The polypeptide is Large ribosomal subunit protein bL25 (Chloroherpeton thalassium (strain ATCC 35110 / GB-78)).